Consider the following 170-residue polypeptide: Cathelicidin antimicrobial peptide (170 aa).

The first 30 residues, 1–30 (MKTQRDGHSLGGWSLMLLLLGLLMPLAIVA), serve as a signal peptide directing secretion. The propeptide at 31-131 (QVLSYKEAVL…DISCDKDNRR (101 aa)) is cathelin-like domain (CLD). Intrachain disulfides connect cysteine 86–cysteine 97 and cysteine 108–cysteine 125. Positions 150-162 (FKRIVQRIKDFLQ) are active core.

The protein belongs to the cathelicidin family. As to quaternary structure, monomer, homodimer or homotrimer (in vitro). Oligomerizes as tetra- or hexamer in solution (in vitro). Proteolytically cleaved by proteinase PRTN3 into antibacterial peptide LL-37. Proteolytically cleaved by cathepsin CTSG and neutrophil elastase ELANE. Post-translationally, resistant to proteolytic degradation in solution, and when bound to both zwitterionic (mimicking mammalian membranes) and negatively charged membranes (mimicking bacterial membranes). In terms of processing, after secretion onto the skin surface, the CAMP gene product is processed by a serine protease-dependent mechanism into multiple novel antimicrobial peptides distinct from and shorter than cathelicidin LL-37. These peptides show enhanced antimicrobial action, acquiring the ability to kill skin pathogens such as S.aureus, E.coli and C.albicans. These peptides have lost the ability to stimulate CXCL8/IL8 release from keratinocytes. The peptides act synergistically, killing bacteria at lower concentrations when present together, and maintain activity at increased salt condition.

The protein resides in the secreted. It localises to the vesicle. Antimicrobial protein that is an integral component of the innate immune system. Binds to bacterial lipopolysaccharides (LPS). Acts via neutrophil N-formyl peptide receptors to enhance the release of CXCL2. Postsecretory processing generates multiple cathelicidin antimicrobial peptides with various lengths which act as a topical antimicrobial defense in sweat on skin. The unprocessed precursor form, cathelicidin antimicrobial peptide, inhibits the growth of Gram-negative E.coli and E.aerogenes with efficiencies comparable to that of the mature peptide LL-37 (in vitro). Its function is as follows. Antimicrobial peptide that is an integral component of the innate immune system. Binds to bacterial lipopolysaccharides (LPS). Causes membrane permeabilization by forming transmembrane pores (in vitro). Causes lysis of E.coli. Exhibits antimicrobial activity against Gram-negative bacteria such as P.aeruginosa, S.typhimurium, E.aerogenes, E.coli and P.syringae, Gram-positive bacteria such as L.monocytogenes, S.epidermidis, S.pyogenes and S.aureus, as well as vancomycin-resistant enterococci (in vitro). Exhibits antimicrobial activity against methicillin-resistant S.aureus, P.mirabilis, and C.albicans in low-salt media, but not in media containing 100 mM NaCl (in vitro). Forms chiral supramolecular assemblies with quinolone signal (PQS) molecules of P.aeruginosa, which may lead to interference of bacterial quorum signaling and perturbance of bacterial biofilm formation. May form supramolecular fiber-like assemblies on bacterial membranes. Induces cytokine and chemokine producation as well as TNF/TNFA and CSF2/GMCSF production in normal human keratinocytes. Exhibits hemolytic activity against red blood cells. In terms of biological role, exhibits antimicrobial activity against E.coli and B.megaterium (in vitro). This Hylobates moloch (Silvery gibbon) protein is Cathelicidin antimicrobial peptide.